A 238-amino-acid chain; its full sequence is Endonuclease III homolog (238 aa).

The HhH domain maps to 129-155 (REKGLPREMKDLISLPGIGNKMALLYM). Lysine 149 serves as the catalytic Nucleophile; for N-glycosylase activity. Residues cysteine 217, cysteine 224, cysteine 227, and cysteine 233 each contribute to the [4Fe-4S] cluster site.

Belongs to the Nth/MutY family. Requires [4Fe-4S] cluster as cofactor.

It localises to the nucleus. It is found in the mitochondrion. It carries out the reaction 2'-deoxyribonucleotide-(2'-deoxyribose 5'-phosphate)-2'-deoxyribonucleotide-DNA = a 3'-end 2'-deoxyribonucleotide-(2,3-dehydro-2,3-deoxyribose 5'-phosphate)-DNA + a 5'-end 5'-phospho-2'-deoxyribonucleoside-DNA + H(+). Its function is as follows. Bifunctional DNA N-glycosylase with associated apurinic/apyrimidinic (AP) lyase function that catalyzes the first step in base excision repair (BER), the primary repair pathway for the repair of oxidative DNA damage. The DNA N-glycosylase activity releases the damaged DNA base from DNA by cleaving the N-glycosidic bond, leaving an AP site. The AP lyase activity cleaves the phosphodiester bond 3' to the AP site by a beta-elimination. Primarily recognizes and repairs oxidative base damage of pyrimidines. This is Endonuclease III homolog from Encephalitozoon cuniculi (strain GB-M1) (Microsporidian parasite).